Here is an 81-residue protein sequence, read N- to C-terminus: ATP synthase subunit c, chloroplastic (81 aa).

A run of 2 helical transmembrane segments spans residues 3 to 23 and 57 to 77; these read PLIS…ASIG and LAFM…LLFA.

This sequence belongs to the ATPase C chain family. As to quaternary structure, F-type ATPases have 2 components, F(1) - the catalytic core - and F(0) - the membrane proton channel. F(1) has five subunits: alpha(3), beta(3), gamma(1), delta(1), epsilon(1). F(0) has four main subunits: a(1), b(1), b'(1) and c(10-14). The alpha and beta chains form an alternating ring which encloses part of the gamma chain. F(1) is attached to F(0) by a central stalk formed by the gamma and epsilon chains, while a peripheral stalk is formed by the delta, b and b' chains.

The protein localises to the plastid. The protein resides in the chloroplast thylakoid membrane. In terms of biological role, f(1)F(0) ATP synthase produces ATP from ADP in the presence of a proton or sodium gradient. F-type ATPases consist of two structural domains, F(1) containing the extramembraneous catalytic core and F(0) containing the membrane proton channel, linked together by a central stalk and a peripheral stalk. During catalysis, ATP synthesis in the catalytic domain of F(1) is coupled via a rotary mechanism of the central stalk subunits to proton translocation. Key component of the F(0) channel; it plays a direct role in translocation across the membrane. A homomeric c-ring of between 10-14 subunits forms the central stalk rotor element with the F(1) delta and epsilon subunits. This Ipomoea purpurea (Common morning glory) protein is ATP synthase subunit c, chloroplastic.